The chain runs to 218 residues: MNSVTISHAPYTITYHDDWEPVMSQLVEFYNEVASWLLRDETSPIPDKFFIQLKQPLRNKRVCVCGIDPYPKDGTGVPFESPNFTKKSIKEIASSISRLTGVIDYKGYNLNIIDGVIPWNYYLSCKLGETKSHAIYWDKISKLLLQHITKHVSVLYCLGKTDFSNIRAKLESPVTTIVGYHPAARDHQFEKDRSFEIINVLLELDNKTPINWAQGFIY.

Belongs to the uracil-DNA glycosylase (UDG) superfamily. UNG family. As to quaternary structure, homodimer. Interacts with protein OPG148. Component of the Uracil-DNA glycosylase(UDG)-OPG148-polymerase complex; OPG148 and UDG form a heterodimeric processivity factor that associates with OPG71 to form the processive polymerase holoenzyme.

The enzyme catalyses Hydrolyzes single-stranded DNA or mismatched double-stranded DNA and polynucleotides, releasing free uracil.. Plays an essential role in viral replication as a component of the DNA polymerase processivity factor. Excises uracil residues from the DNA which can arise as a result of misincorporation of dUMP residues by DNA polymerase or due to deamination of cytosine. The protein is Uracil-DNA glycosylase (OPG116) of Monkeypox virus.